Here is a 113-residue protein sequence, read N- to C-terminus: 14 kDa zinc-binding protein (113 aa).

An HIT domain is found at 3-113 (IFGKIISKEI…GGRQMNWPPG (111 aa)). The short motif at 97–101 (HIHVH) is the Histidine triad motif element.

As to quaternary structure, homodimer.

The polypeptide is 14 kDa zinc-binding protein (Brassica juncea (Indian mustard)).